The chain runs to 348 residues: Isopentenyl-diphosphate delta-isomerase (348 aa).

Substrate is bound at residue 11 to 12 (RK). FMN-binding positions include 70-72 (AMT), Ser-100, and Asn-131. Residue 100-102 (SQR) coordinates substrate. Gln-165 provides a ligand contact to substrate. Residue Glu-166 coordinates Mg(2+). Residues Lys-197, Thr-231, 278 to 280 (GIR), and 299 to 300 (AR) each bind FMN.

The protein belongs to the IPP isomerase type 2 family. As to quaternary structure, homooctamer. Dimer of tetramers. FMN serves as cofactor. It depends on NADPH as a cofactor. Requires Mg(2+) as cofactor.

Its subcellular location is the cytoplasm. The catalysed reaction is isopentenyl diphosphate = dimethylallyl diphosphate. In terms of biological role, involved in the biosynthesis of isoprenoids. Catalyzes the 1,3-allylic rearrangement of the homoallylic substrate isopentenyl (IPP) to its allylic isomer, dimethylallyl diphosphate (DMAPP). This is Isopentenyl-diphosphate delta-isomerase from Mycobacterium marinum (strain ATCC BAA-535 / M).